Consider the following 92-residue polypeptide: Large ribosomal subunit protein bL34m (92 aa).

Residues 1-46 (MAFLARCFGCQACRSVALLSGRYLQSRVWMGLPDSWPLLSLQQARG) constitute a mitochondrion transit peptide. Ser-71 carries the phosphoserine modification.

It belongs to the bacterial ribosomal protein bL34 family. Component of the mitochondrial ribosome large subunit (39S) which comprises a 16S rRNA and about 50 distinct proteins.

The protein resides in the mitochondrion. The sequence is that of Large ribosomal subunit protein bL34m (Mrpl34) from Mus musculus (Mouse).